A 1958-amino-acid polypeptide reads, in one-letter code: Echinoderm microtubule-associated protein-like 6 (1958 aa).

WD repeat units follow at residues 59-100 (GHND…TVSL), 104-145 (VHTH…LLAS), 148-187 (GHSD…LTAK), 195-233 (GDLQ…RTIQ), 235-273 (AHSA…TKID), 280-321 (GYKG…LILQ), 323-362 (HCEG…LIAR), 364-403 (NMEE…EVVH), 406-445 (DRKE…KKIG), and 561-601 (GHSA…VSNG). Positions 603-626 (LETAPQEGGADSYSEESDSDLSDV) are disordered. Positions 615 to 626 (YSEESDSDLSDV) are enriched in acidic residues. WD repeat units follow at residues 725-766 (GHDD…CLSL), 770-811 (QHQR…KIAT), 814-853 (GHKD…FTSK), 861-900 (GKLE…KTVK), 901-940 (AHDG…KTYA), 996-1035 (HMEG…RMLA), 1038-1077 (KLKK…DMVS), 1080-1120 (HRKE…RVGI), 1191-1230 (SDIT…QHAR), and 1236-1276 (GHSA…TQES). Residues 1322–1337 (KPHQQLKEVSVEERPP) show a composition bias toward basic and acidic residues. The disordered stretch occupies residues 1322 to 1353 (KPHQQLKEVSVEERPPVSRAAPQPEKLQKNNI). WD repeat units follow at residues 1412–1456 (EHTD…TLSM), 1460–1501 (FHSK…KVAS), 1504–1543 (GHLE…LLYK), 1553–1591 (AKMQ…RLVA), 1593–1638 (AHTG…CRAF), 1685–1724 (HMEG…LLNK), 1726–1767 (SLGH…GKKR), 1768–1807 (DRKS…NLNR), 1880–1919 (ADKA…KFAK), and 1925–1958 (GHSA…WRCL).

It belongs to the WD repeat EMAP family.

It localises to the cytoplasm. It is found in the cytoskeleton. May modify the assembly dynamics of microtubules, such that microtubules are slightly longer, but more dynamic. In Homo sapiens (Human), this protein is Echinoderm microtubule-associated protein-like 6 (EML6).